We begin with the raw amino-acid sequence, 227 residues long: PKHD-type hydroxylase Reut_B4660 (227 aa).

One can recognise a Fe2OG dioxygenase domain in the interval 78 to 178; sequence KVFPPLFNRY…RVSSFFWIQS (101 aa). Residues histidine 96, aspartate 98, and histidine 159 each coordinate Fe cation. Residue arginine 169 participates in 2-oxoglutarate binding.

Fe(2+) serves as cofactor. It depends on L-ascorbate as a cofactor.

This chain is PKHD-type hydroxylase Reut_B4660, found in Cupriavidus pinatubonensis (strain JMP 134 / LMG 1197) (Cupriavidus necator (strain JMP 134)).